Reading from the N-terminus, the 173-residue chain is DASH complex subunit SPC19 (173 aa).

This sequence belongs to the DASH complex SPC19 family. In terms of assembly, component of the DASH complex consisting of ASK1, DAD1, DAD2, DAD3, DAD4, DAM1, DUO1, HSK3, SPC19 and SPC34, with a stoichiometry of one copy of each subunit per complex. Multiple DASH complexes oligomerize to form a ring that encircles spindle microtubules and organizes the rod-like NDC80 complexes of the outer kinetochore. DASH complex oligomerization strengthens microtubule attachments. On cytoplasmic microtubules, DASH complexes appear to form patches instead of rings.

The protein localises to the nucleus. It is found in the cytoplasm. The protein resides in the cytoskeleton. Its subcellular location is the spindle. It localises to the chromosome. The protein localises to the centromere. It is found in the kinetochore. In terms of biological role, component of the DASH complex that connects microtubules with kinetochores and couples microtubule depolymerisation to chromosome movement; it is involved in retrieving kinetochores to the spindle poles before their re-orientation on the spindle in early mitosis and allows microtubule depolymerization to pull chromosomes apart and resist detachment during anaphase. Kinetochores, consisting of a centromere-associated inner segment and a microtubule-contacting outer segment, play a crucial role in chromosome segregation by mediating the physical connection between centromeric DNA and microtubules. Kinetochores also serve as an input point for the spindle assembly checkpoint, which delays anaphase until all chromosomes have bioriented on the mitotic spindle. In Chaetomium thermophilum (strain DSM 1495 / CBS 144.50 / IMI 039719) (Thermochaetoides thermophila), this protein is DASH complex subunit SPC19.